A 192-amino-acid chain; its full sequence is Protein GrpE (192 aa).

Positions 1 to 34 (MSSKEQKTPNEQVSEEMENTAEQQVEATQETGEC) are disordered. Residues 20 to 31 (TAEQQVEATQET) show a composition bias toward polar residues.

The protein belongs to the GrpE family. In terms of assembly, homodimer.

Its subcellular location is the cytoplasm. Participates actively in the response to hyperosmotic and heat shock by preventing the aggregation of stress-denatured proteins, in association with DnaK and GrpE. It is the nucleotide exchange factor for DnaK and may function as a thermosensor. Unfolded proteins bind initially to DnaJ; upon interaction with the DnaJ-bound protein, DnaK hydrolyzes its bound ATP, resulting in the formation of a stable complex. GrpE releases ADP from DnaK; ATP binding to DnaK triggers the release of the substrate protein, thus completing the reaction cycle. Several rounds of ATP-dependent interactions between DnaJ, DnaK and GrpE are required for fully efficient folding. The chain is Protein GrpE from Yersinia pseudotuberculosis serotype I (strain IP32953).